We begin with the raw amino-acid sequence, 307 residues long: Ornithine carbamoyltransferase (307 aa).

Carbamoyl phosphate contacts are provided by residues 56 to 59 (STRT), Gln-83, Arg-107, and 134 to 137 (HPCQ). Residues Asn-165, Asp-223, and 227–228 (SM) contribute to the L-ornithine site. Carbamoyl phosphate-binding positions include 263-264 (CL) and Arg-291.

Belongs to the aspartate/ornithine carbamoyltransferase superfamily. OTCase family.

It localises to the cytoplasm. It catalyses the reaction carbamoyl phosphate + L-ornithine = L-citrulline + phosphate + H(+). The protein operates within amino-acid degradation; L-arginine degradation via ADI pathway; carbamoyl phosphate from L-arginine: step 2/2. Reversibly catalyzes the transfer of the carbamoyl group from carbamoyl phosphate (CP) to the N(epsilon) atom of ornithine (ORN) to produce L-citrulline. The chain is Ornithine carbamoyltransferase from Cupriavidus taiwanensis (strain DSM 17343 / BCRC 17206 / CCUG 44338 / CIP 107171 / LMG 19424 / R1) (Ralstonia taiwanensis (strain LMG 19424)).